The following is a 1080-amino-acid chain: Origin recognition complex subunit 3 (1080 aa).

3 disordered regions span residues 92–112 (YGISKGDDDDDGDYVGGDDSS), 566–701 (TIKL…PKRI), and 869–902 (IKNEIKQQQQQQQQQQQQQQQQQHQQQQKIENEQ). The span at 651–661 (IKSDLECNDND) shows a compositional bias: basic and acidic residues. Positions 662–671 (KDNDDNDNDI) are enriched in acidic residues. Low complexity-rich tracts occupy residues 672 to 688 (NENNNNINNNNNNNSNN) and 875 to 896 (QQQQQQQQQQQQQQQQQHQQQQ).

The protein belongs to the ORC3 family. In terms of assembly, ORC is composed of six subunits.

It is found in the nucleus. In terms of biological role, component of the origin recognition complex (ORC) that binds origins of replication. DNA-binding is ATP-dependent, however specific DNA sequences that define origins of replication have not been identified so far. ORC is required to assemble the pre-replication complex necessary to initiate DNA replication. The chain is Origin recognition complex subunit 3 (orcC) from Dictyostelium discoideum (Social amoeba).